The following is a 215-amino-acid chain: Pyrrolidone-carboxylate peptidase (215 aa).

Active-site residues include Glu80, Cys143, and His167.

The protein belongs to the peptidase C15 family. As to quaternary structure, homotetramer.

It is found in the cytoplasm. The catalysed reaction is Release of an N-terminal pyroglutamyl group from a polypeptide, the second amino acid generally not being Pro.. In terms of biological role, removes 5-oxoproline from various penultimate amino acid residues except L-proline. The sequence is that of Pyrrolidone-carboxylate peptidase from Bacillus cereus (strain B4264).